Here is a 284-residue protein sequence, read N- to C-terminus: Protein-S-isoprenylcysteine O-methyltransferase (284 aa).

The Cytoplasmic segment spans residues 1–16; the sequence is MAGCAARAPPGSEARL. A helical membrane pass occupies residues 17-33; it reads SLATFLLGASVLALPLL. The Lumenal segment spans residues 34–41; it reads TRAGLQGR. Residues 42–59 form a helical membrane-spanning segment; it reads TGLALYVAGLNALLLLLY. At 60 to 69 the chain is on the cytoplasmic side; it reads RPPRYQIAIR. The chain crosses the membrane as a helical span at residues 70–87; sequence ACFLGFVFGCGTLLSFSQ. Residues 88-92 lie on the Lumenal side of the membrane; the sequence is SSWSH. A helical membrane pass occupies residues 93–112; the sequence is FGWYMCSLSLFHYSEYLVTA. Over 113–131 the chain is Cytoplasmic; it reads VNNPKSLSLDSFLLNHSLE. Residues 132 to 149 form a helical membrane-spanning segment; sequence YTVAALSSWLEFTLENIF. Over 150 to 154 the chain is Lumenal; the sequence is WPELK. The helical transmembrane segment at 155–174 threads the bilayer; it reads QITWLSVTGLLMVVFGECLR. The Cytoplasmic segment spans residues 175 to 212; sequence KAAMFTAGSNFNHVVQNEKSDTHTLVTSGVYAWFRHPS. S-adenosyl-L-methionine-binding positions include Q190, 197 to 200, Y205, and 210 to 213; these read HTLV and HPSY. Residues 213–228 traverse the membrane as a helical segment; sequence YVGWFYWSIGTQVMLC. A topological domain (lumenal) is located at residue N229. The chain crosses the membrane as a helical span at residues 230–244; that stretch reads PICGVSYALTVWRFF. At 245-284 the chain is on the cytoplasmic side; sequence RDRTEEEEISLIHFFGEEYLEYKKRVPTGLPFIKGVKVDL. R247 lines the substrate pocket. E251 contacts S-adenosyl-L-methionine.

It belongs to the class VI-like SAM-binding methyltransferase superfamily. Isoprenylcysteine carboxyl methyltransferase family. As to expression, ubiquitously expressed. Expressed at higher levels in the cerebellum and putamen than in other brain regions. Abundant expression seen in the Purkinje cells and pontine neurons.

Its subcellular location is the endoplasmic reticulum membrane. It catalyses the reaction [protein]-C-terminal S-[(2E,6E)-farnesyl]-L-cysteine + S-adenosyl-L-methionine = [protein]-C-terminal S-[(2E,6E)-farnesyl]-L-cysteine methyl ester + S-adenosyl-L-homocysteine. Competitively inhibited by N-acetyl-S-trans,trans-farnesyl-l-cysteine (AFC). Functionally, catalyzes the post-translational methylation of isoprenylated C-terminal cysteine residues. This chain is Protein-S-isoprenylcysteine O-methyltransferase (ICMT), found in Homo sapiens (Human).